The following is a 390-amino-acid chain: Protein STRICTOSIDINE SYNTHASE-LIKE 3 (390 aa).

A signal peptide spans 1–25 (MAMSILAKIFLVFAIYCAIDPFSHS). N-linked (GlcNAc...) asparagine glycosylation is found at Asn95 and Asn108.

The protein belongs to the strictosidine synthase family.

It is found in the vacuole. The sequence is that of Protein STRICTOSIDINE SYNTHASE-LIKE 3 from Arabidopsis thaliana (Mouse-ear cress).